Reading from the N-terminus, the 363-residue chain is Molybdenum import ATP-binding protein ModC (363 aa).

The 232-residue stretch at 1-232 folds into the ABC transporter domain; that stretch reads MLDLDLRRRQ…PGLRPLTGRY (232 aa). Residue 30–37 participates in ATP binding; sequence GRSGSGKT. The Mop domain maps to 292–358; that stretch reads RVSIRNVLPA…IKALTIARGD (67 aa).

Belongs to the ABC transporter superfamily. Molybdate importer (TC 3.A.1.8) family. As to quaternary structure, the complex is composed of two ATP-binding proteins (ModC), two transmembrane proteins (ModB) and a solute-binding protein (ModA).

Its subcellular location is the cell inner membrane. The enzyme catalyses molybdate(out) + ATP + H2O = molybdate(in) + ADP + phosphate + H(+). Part of the ABC transporter complex ModABC involved in molybdenum import. Responsible for energy coupling to the transport system. The polypeptide is Molybdenum import ATP-binding protein ModC (Paramagnetospirillum magneticum (strain ATCC 700264 / AMB-1) (Magnetospirillum magneticum)).